A 128-amino-acid polypeptide reads, in one-letter code: Cytochrome c' (128 aa).

Heme c contacts are provided by Gln-13, Gln-17, Glu-69, Thr-70, Cys-118, Cys-121, and His-122.

In terms of processing, binds 1 heme c group covalently per subunit.

In terms of biological role, cytochrome c' is the most widely occurring bacterial c-type cytochrome. Cytochromes c' are high-spin proteins and the heme has no sixth ligand. Their exact function is not known. The sequence is that of Cytochrome c' from Magnetospirillum fulvum (Rhodospirillum fulvum).